A 454-amino-acid polypeptide reads, in one-letter code: GTPase Der (454 aa).

EngA-type G domains follow at residues 3–167 and 181–354; these read PVIT…GIAE and MKIA…AAAM. Residues 9–16, 56–60, 119–122, 187–194, 234–238, and 299–302 each bind GTP; these read GRPNVGKS, DTGGF, NKTE, DTAGL, and NKWD. Residues 355–439 enclose the KH-like domain; sequence AKLPTPRLTR…PLRIQMNTAK (85 aa).

This sequence belongs to the TRAFAC class TrmE-Era-EngA-EngB-Septin-like GTPase superfamily. EngA (Der) GTPase family. As to quaternary structure, associates with the 50S ribosomal subunit.

GTPase that plays an essential role in the late steps of ribosome biogenesis. The chain is GTPase Der from Polynucleobacter asymbioticus (strain DSM 18221 / CIP 109841 / QLW-P1DMWA-1) (Polynucleobacter necessarius subsp. asymbioticus).